We begin with the raw amino-acid sequence, 371 residues long: MSGNTFGKLFTVTTFGESHGLALGAIIDGCPPGIELSEEDLQLDLDRRKPGTSRYTTQRKEADQVKILSGVFEGKTTGTPIGLLIENTDQRSKDYGKIKDQFRPAHADYTYMQKYGIRDYRGGGRSSARETAMRVAAGAVAKKVLANLWGIKIRGYLSQLGPIKAELLDWNEVEQNPFFCPDKSKVPEMEAYMQALNKEGNSVGAKITVVAENMIPGLGEPVFDRIDADLAHALMGINAVKGVEIGAGFACVAQKGTEHRDEITPEGFKSNQAGGVLGGISTGQDLIASLALKPTSSLRIPGQSVDIEGNPVEVITTGRHDPCVGIRATPIAEAMMALVILDHALRNRGQNGHVQSGVPIIPGSIPGQIGS.

Positions 48 and 54 each coordinate NADP(+). Residues 125-127 (RSS), 238-239 (NA), Gly-278, 293-297 (KPTSS), and Arg-319 each bind FMN.

This sequence belongs to the chorismate synthase family. As to quaternary structure, homotetramer. FMNH2 serves as cofactor.

The catalysed reaction is 5-O-(1-carboxyvinyl)-3-phosphoshikimate = chorismate + phosphate. It participates in metabolic intermediate biosynthesis; chorismate biosynthesis; chorismate from D-erythrose 4-phosphate and phosphoenolpyruvate: step 7/7. Its function is as follows. Catalyzes the anti-1,4-elimination of the C-3 phosphate and the C-6 proR hydrogen from 5-enolpyruvylshikimate-3-phosphate (EPSP) to yield chorismate, which is the branch point compound that serves as the starting substrate for the three terminal pathways of aromatic amino acid biosynthesis. This reaction introduces a second double bond into the aromatic ring system. This Saccharophagus degradans (strain 2-40 / ATCC 43961 / DSM 17024) protein is Chorismate synthase.